The chain runs to 599 residues: Endo-1,4-beta-xylanase B (599 aa).

The signal sequence occupies residues 1–37; the sequence is MTISASDYRHPGNFLKRTTALLCVGTALTALAFNASA. The CBM2 domain occupies 38 to 136; that stretch reads ACTYTIDSEW…TVTGAACNSA (99 aa). A disulfide bridge links Cys39 with Cys133. Residues 163–289 enclose the CBM6 domain; the sequence is LLQEAQAGFC…LPNIDSLSVV (127 aa). Positions 315–595 constitute a GH10 domain; that stretch reads SSSAASAKKF…RPAMTWLINN (281 aa). Glu431 acts as the Proton donor in catalysis. Glu530 acts as the Nucleophile in catalysis.

Belongs to the glycosyl hydrolase 10 (cellulase F) family.

The catalysed reaction is Endohydrolysis of (1-&gt;4)-beta-D-xylosidic linkages in xylans.. Its pathway is glycan metabolism; hemicellulose degradation. Xylanase B contributes to hydrolyze hemicellulose, the major component of plant cell-walls. This is Endo-1,4-beta-xylanase B (xynB) from Cellvibrio japonicus (strain Ueda107) (Pseudomonas fluorescens subsp. cellulosa).